Consider the following 622-residue polypeptide: Chaperone protein HscA homolog (622 aa).

It belongs to the heat shock protein 70 family.

In terms of biological role, chaperone involved in the maturation of iron-sulfur cluster-containing proteins. Has a low intrinsic ATPase activity which is markedly stimulated by HscB. This Acidovorax ebreus (strain TPSY) (Diaphorobacter sp. (strain TPSY)) protein is Chaperone protein HscA homolog.